We begin with the raw amino-acid sequence, 318 residues long: Trans-prenyltransferase (318 aa).

A helical membrane pass occupies residues 1–21 (MLHLIYISIIVVLIIILISYT). Residues lysine 85, arginine 88, and histidine 122 each contribute to the isopentenyl diphosphate site. Mg(2+) is bound by residues aspartate 129 and aspartate 135. Residue arginine 140 coordinates dimethylallyl diphosphate. An isopentenyl diphosphate-binding site is contributed by arginine 141. Dimethylallyl diphosphate is bound by residues lysine 216, threonine 217, and glutamine 254.

It belongs to the FPP/GGPP synthase family. Asfivirus trans-prenyltransferase subfamily. Mg(2+) serves as cofactor.

The protein resides in the host endoplasmic reticulum. The protein localises to the host membrane. The catalysed reaction is isopentenyl diphosphate + dimethylallyl diphosphate = (2E)-geranyl diphosphate + diphosphate. It catalyses the reaction isopentenyl diphosphate + (2E)-geranyl diphosphate = (2E,6E)-farnesyl diphosphate + diphosphate. The enzyme catalyses isopentenyl diphosphate + (2E,6E)-farnesyl diphosphate = (2E,6E,10E)-geranylgeranyl diphosphate + diphosphate. It carries out the reaction isopentenyl diphosphate + (2E,6E,10E)-geranylgeranyl diphosphate = (2E,6E,10E,14E)-geranylfarnesyl diphosphate + diphosphate. The protein operates within isoprenoid biosynthesis; farnesyl diphosphate biosynthesis; farnesyl diphosphate from geranyl diphosphate and isopentenyl diphosphate: step 1/1. It functions in the pathway isoprenoid biosynthesis; geranyl diphosphate biosynthesis; geranyl diphosphate from dimethylallyl diphosphate and isopentenyl diphosphate: step 1/1. It participates in isoprenoid biosynthesis; geranylgeranyl diphosphate biosynthesis; geranylgeranyl diphosphate from farnesyl diphosphate and isopentenyl diphosphate: step 1/1. Its function is as follows. Trans-prenyltransferase that catalyzes the sequential condensation of isopentenyl diphosphate (IPP) with different allylic diphosphates, such as dimethylallyl diphosphate (DMAPP), geranyl diphosphate (GPP), farnesyl diphosphate (FPP) and geranylgeranyl diphosphate (GGPP), farnesyl diphosphate being the best allylic substrate. This chain is Trans-prenyltransferase, found in African swine fever virus (strain Badajoz 1971 Vero-adapted) (Ba71V).